The sequence spans 259 residues: Protein TILLER ANGLE CONTROL 1 (259 aa).

The IGT motif signature appears at 56–62 (GILAIGT). 3 disordered regions span residues 96 to 123 (EEKA…AKMH), 206 to 226 (SCME…PLKA), and 239 to 259 (GKKI…PVTA). A compositionally biased stretch (low complexity) spans 109–119 (APSEPASALEP).

It belongs to the TAC family. Expressed in the basal part of seedlings.

Involved in the regulation of tiller growth angle. Promotes horizontal shoot growth. TAC1 and LAZY1 play opposite functions in the regulation of tiller growth angle. The protein is Protein TILLER ANGLE CONTROL 1 of Oryza sativa subsp. indica (Rice).